A 976-amino-acid polypeptide reads, in one-letter code: Dolichyl-phosphooligosaccharide-protein glycotransferase 1 (976 aa).

Over 1–21 (MVKSKVKKVEKGKEGEEKRST) the chain is Cytoplasmic. A helical membrane pass occupies residues 22–42 (YVLLKKVLIPILVFGFAIYAF). Over 43–112 (YLRHLTAGKY…KVVSLFGYNE (70 aa)) the chain is Extracellular. The DXD motif 1 signature appears at 55–57 (DPD). Residue aspartate 57 coordinates Mn(2+). Residues 113 to 133 (LQAFLLWPPFVGFLGVIAVYL) form a helical membrane-spanning segment. The Cytoplasmic segment spans residues 134 to 135 (LG). The chain crosses the membrane as a helical span at residues 136 to 156 (RKVLNEWTGLWGAVVLTVSTA). Topologically, residues 157 to 165 (NFSRTFSGN) are extracellular. The helical transmembrane segment at 166–186 (ARGDGPFMALFIFASVAMLYY) threads the bilayer. The Mn(2+) site is built by arginine 167 and aspartate 169. The DXD motif 2 signature appears at 167-169 (RGD). Topologically, residues 187 to 193 (LKESNKT) are cytoplasmic. Residues 194-214 (RKIIYGTLFVLLTVISLGAWN) traverse the membrane as a helical segment. Glycine 215 is a topological domain (extracellular). The chain crosses the membrane as a helical span at residues 216 to 236 (SPFGLMVLLGFASLQTIILFI). The Cytoplasmic portion of the chain corresponds to 237–247 (FGKLEELKKFV). A helical transmembrane segment spans residues 248-268 (KEFYPAYLAILAFGYALTFPG). Residue isoleucine 269 is a topological domain, extracellular. Residues 270-290 (VKIGGFIRFAFEVFLGLIFLL) form a helical membrane-spanning segment. Residues 291-306 (VIMLYGGRYLNYSDKK) are Cytoplasmic-facing. A helical transmembrane segment spans residues 307-327 (HRFLVVTIIVLLGFGGAYAYV). Residues 328–360 (GPKLFRLMGGAYQSTQVYETVQELAKTTIGDVK) are Extracellular-facing. A TIXE motif motif is present at residues 347-350 (TVQE). A helical transmembrane segment spans residues 361–381 (AYYGVESGNGLIFFLSIPGLL). The Cytoplasmic portion of the chain corresponds to 382–396 (ILLTKYLYDLFKKAK). The helical transmembrane segment at 397-417 (SDNETLFALVFYTMSLYLLYL) threads the bilayer. Position 418 (alanine 418) is a topological domain, extracellular. Residues 419–439 (VRFLFLASYAVALFFGIFIGF) traverse the membrane as a helical segment. Arginine 420 is an a glycophospholipid binding site. Residues 440–453 (SMDVIEKMKENIGI) are Cytoplasmic-facing. Residues 454–474 (KAALGIVLSLMILVIPFVHAP) traverse the membrane as a helical segment. Over 475-976 (VLARSARALK…SASAPHHSSE (502 aa)) the chain is Extracellular. The tract at residues 513–515 (WWD) is interacts with target acceptor peptide in protein substrate. The WWDYG motif motif lies at 513–517 (WWDYG). Tyrosine 518 lines the a glycophospholipid pocket. The short motif at 573-580 (DWAKFNAI) is the DK motif element.

Belongs to the STT3 family. Mn(2+) is required as a cofactor. Mg(2+) serves as cofactor.

Its subcellular location is the cell membrane. The catalysed reaction is an archaeal dolichyl phosphooligosaccharide + [protein]-L-asparagine = an archaeal dolichyl phosphate + a glycoprotein with the oligosaccharide chain attached by N-beta-D-glycosyl linkage to a protein L-asparagine.. It participates in protein modification; protein glycosylation. Its function is as follows. Oligosaccharyl transferase (OST) that catalyzes the initial transfer of a defined glycan (ManNAcXyl(2)GlcAMan(2)GalNAc in Pyrococcus) from the lipid carrier dolichol-monophosphate to an asparagine residue within an Asn-X-Ser/Thr consensus motif in nascent polypeptide chains, the first step in protein N-glycosylation. This is Dolichyl-phosphooligosaccharide-protein glycotransferase 1 (aglB1) from Pyrococcus horikoshii (strain ATCC 700860 / DSM 12428 / JCM 9974 / NBRC 100139 / OT-3).